Reading from the N-terminus, the 1108-residue chain is Valine--tRNA ligase, mitochondrial 1 (1108 aa).

The transit peptide at 1-46 (MSLLFLRRAKPLFVSCCSATHSRSSFLSPTLTNQLVRSFHGSRTMS) directs the protein to the mitochondrion. The span at 57–93 (ELERKKKKEEKAKEKELKKQKALEKERLAELKAKQAK) shows a compositional bias: basic and acidic residues. Residues 57–138 (ELERKKKKEE…RKRLSSQMAK (82 aa)) are disordered. Residues 177-187 (PNVTGALHIGH) carry the 'HIGH' region motif. The 'KMSKS' region signature appears at 695-699 (KMSKS). Lysine 698 is an ATP binding site. Residues 1032–1064 (AINTEAEQEKIRNKIGELQKQKEKLQKMMSVST) adopt a coiled-coil conformation.

This sequence belongs to the class-I aminoacyl-tRNA synthetase family.

Its subcellular location is the mitochondrion. It localises to the cytoplasm. It is found in the cytosol. It carries out the reaction tRNA(Val) + L-valine + ATP = L-valyl-tRNA(Val) + AMP + diphosphate. In terms of biological role, required for embryo development and seed viability. The polypeptide is Valine--tRNA ligase, mitochondrial 1 (Arabidopsis thaliana (Mouse-ear cress)).